Reading from the N-terminus, the 833-residue chain is EF-hand domain-containing family member B (833 aa).

2 consecutive EF-hand domains span residues 561 to 596 (QKFD…ANLS) and 597 to 632 (LDDK…KDKM). Residues Asp574, Asp578, Met580, Glu585, Asp610, Asp612, Asp614, and Glu621 each contribute to the Ca(2+) site.

Microtubule inner protein component of sperm flagellar doublet microtubules. Interacts with STIM1 and ORAI1; the interactions take place upon Ca(2+)-store depletion and dissociate through a Ca(2+)-dependent mechanism. Interaction with STIM1 inhibits STIM1 interaction with SARAF. Expressed in airway epithelial cells.

It is found in the cytoplasm. The protein resides in the cytoskeleton. The protein localises to the cilium axoneme. Its subcellular location is the flagellum axoneme. In terms of biological role, microtubule inner protein (MIP) part of the dynein-decorated doublet microtubules (DMTs) in cilia axoneme, which is required for motile cilia beating. Cytosolic sensor for calcium, modulates the interaction of STIM1 and ORAI1 upon store depletion and the activation of store-operated Ca(2+) entry (SOCE) and NFAT translocation from cytosol to nucleus. The sequence is that of EF-hand domain-containing family member B from Homo sapiens (Human).